The following is a 485-amino-acid chain: G2/mitotic-specific cyclin-A1 (485 aa).

Residues 1–24 (MRSALSLKPSNGNAAKSQAVNNKN) form a disordered region. Residues 8-24 (KPSNGNAAKSQAVNNKN) show a composition bias toward polar residues.

It belongs to the cyclin family. Cyclin AB subfamily. Expressed in the cell lineages ABarp, C and E as well as the NSM neuroblasts.

In terms of biological role, involved in the control of the cell cycle after S phase. May bind to and activate cdk-1 and/or cdk-2 to promote cell cycle progression. Necessary for embryogenesis. This Caenorhabditis elegans protein is G2/mitotic-specific cyclin-A1 (cya-1).